We begin with the raw amino-acid sequence, 1849 residues long: MDHTASQNAQDLIGIPHLGVSGSSTKWHSELSPTEGPHSAGSSTPGFLSPMAELSHPSPPPPALGSLLQLPDGSPSWSMLEVASGPASTQQIKAGVPGRVHNGVSLPTFKNTETATHEAEPPLFQTAESGAIEMTSRKLASATANDSANPLHLSAAPENSRGPALSAEHTSSLVPSLHITTLGQEQAILSGAVPASPSTGTADFPSILTFLQPTENHASPSPVPEMPTLPAEGSDGSPPATRDLLLSSKVPNLLSTSWTFPRWKKDSVTAILGKNEEANVTIPLQAFPRKEVLSLHTVNGFVSDFSTGSVSSPIITAPRTNPLPSGPPLPSILSIQATQTVFPSLGFSSTKPEAYAAAVDHSGLPASASKQVRASPSSMDVYDSLTIGDMKKPATTDVFWSSLSAETGSLSTESIISGLQQQTNYDLNGHTISTTSWETHLAPTAPPNGLTSAADAIKSQDFKDTAGHSVTAEGFSIQDLVLGTSIEQPVQQSDMTMVGSHIDLWPTSNNNHSRDFQTAEVAYYSPTTRHSVSHPQLQLPNQPAHPLLLTSPGPTSTGSLQEMLSDGTDTGSEISSDINSSPERNASTPFQNILGYHSAAESSISTSVFPRTSSRVLRASQHPKKWTADTVSSKVQPTAAAAVTLFLRKSSPPALSAALVAKGTSSSPLAVASGPAKSSSMTTLAKNVTNKAASGPKRTPGAVHTAFPFTPTYMYARTGHTTSTHTAMQGNMDTASGLLSTTYLPRKPQAMHTGLPNPTNLEMPRASTPRPLTVTAALTSITASVKATRLPPLRAENTDAVLPAASAAVVTTGKMASNLECQMSSKLLVKTVLFLTQRRVQISESLKFSIAKGLTQALRKAFHQNDVSAHVDILEYSHNVTVGYYATKGKLVYLPAVVIEMLGVYGVSNVTADLKQHTPHLQSVAVLASPWNPQPAGYFQLKTVLQFVSQADNIQSCKFAQTMEQRLQKAFQDAERKVLNTKSNLTIQIVSTSNASQAVTLVYVVGNQSTFLNGTVASSLLSQLSAELVGFYLTYPPLTIAEPLEYPNLDISETTRDYWVITVLQGVDNSLVGLHNQSFARVMEQRLAQLFMMSQQQGRRFKRATTLGSYTVQMVKMQRVPGPKDPAELTYYTLYNGKPLLGTAAAKILSTIDSQRMALTLHHVVLLQADPVVKNPPNNLWIIAAVLAPIAVVTVIIIIITAVLCRKNKNDFKPDTMINLPQRAKPVQGFDYAKQHLGQQGADEEVIPVTQETVVLPLPIRDAPQERDVAQDGSTIKTAKSTETRKSRSPSENGSVISNESGKPSSGRRSPQNVMAQQKVTKEEARKRNVPASDEEEGAVLFDNSSKVAAEPFDTSSGSVQLIAIKPTALPMVPPTSDRSQESSAVLNGEVNKALKQKSDIEHYRNKLRLKAKRKGYYDFPAVETSKGLTERKKMYEKAPKEMEHVLDPDSELCAPFTESKNRQQMKNSVYRSRQSLNSPSPGETEMDLLVTRERPRRGIRNSGYDTEPEIIEETNIDRVPEPRGYSRSRQVKGHSETSTLSSQPSIDEVRQQMHMLLEEAFSLASAGHAGQSRHQEAYGSAQHLPYSEVVTSAPGTMTRPRAGVQWVPTYRPEMYQYSLPRPAYRFSQLPEMVMGSPPPPVPPRTGPVAVASLRRSTSDIGSKTRMAESTGPEPAQLHDSASFTQMSRGPVSVTQLDQSALNYSGNTVPAVFAIPAANRPGFTGYFIPTPPSSYRNQAWMSYAGENELPSQWADSVPLPGYIEAYPRSRYPQSSPSRLPRQYSQPANLHPSLEQAPAPSTAASQQSLAENDPSDAPLTNISTAALVKAIREEVAKLAKKQTDMFEFQV.

Polar residues predominate over residues 1-10; sequence MDHTASQNAQ. Disordered regions lie at residues 1-70, 142-166, 213-242, and 529-586; these read MDHT…LLQL, ATAN…PALS, PTEN…PATR, and RHSV…ERNA. 2 stretches are compositionally biased toward polar residues: residues 529–541 and 552–586; these read RHSV…QLPN and PGPT…ERNA. The stretch at 958 to 986 forms a coiled coil; that stretch reads KFAQTMEQRLQKAFQDAERKVLNTKSNLT. Residues 1180–1200 form a helical membrane-spanning segment; that stretch reads LWIIAAVLAPIAVVTVIIIII. Disordered stretches follow at residues 1258-1338, 1460-1546, 1656-1679, and 1769-1819; these read LPIR…EEEG, SKNR…SQPS, RSTS…AQLH, and SRYP…APLT. Composition is skewed to polar residues over residues 1290–1319, 1463–1482, and 1537–1546; these read PSEN…AQQK, RQQM…SPSP, and ETSTLSSQPS. Composition is skewed to low complexity over residues 1769–1786 and 1795–1809; these read SRYP…YSQP and QAPA…QSLA.

This sequence belongs to the UPF0606 family.

It localises to the membrane. In Homo sapiens (Human), this protein is UPF0606 protein KIAA1549L (KIAA1549L).